The chain runs to 202 residues: Holliday junction resolvase RecU (202 aa).

The Mg(2+) site is built by threonine 85, aspartate 87, glutamate 100, and glutamine 119.

Belongs to the RecU family. It depends on Mg(2+) as a cofactor.

The protein localises to the cytoplasm. The enzyme catalyses Endonucleolytic cleavage at a junction such as a reciprocal single-stranded crossover between two homologous DNA duplexes (Holliday junction).. Endonuclease that resolves Holliday junction intermediates in genetic recombination. Cleaves mobile four-strand junctions by introducing symmetrical nicks in paired strands. Promotes annealing of linear ssDNA with homologous dsDNA. Required for DNA repair, homologous recombination and chromosome segregation. This chain is Holliday junction resolvase RecU, found in Streptococcus pyogenes serotype M5 (strain Manfredo).